A 512-amino-acid polypeptide reads, in one-letter code: Maturase K (512 aa).

The protein belongs to the intron maturase 2 family. MatK subfamily.

It is found in the plastid. It localises to the chloroplast. Its function is as follows. Usually encoded in the trnK tRNA gene intron. Probably assists in splicing its own and other chloroplast group II introns. This chain is Maturase K, found in Oenothera biennis (German evening primrose).